The following is a 581-amino-acid chain: Urease subunit alpha (581 aa).

Residues 134–581 (GGFDSHIHFI…LPMTQRYFLF (448 aa)) enclose the Urease domain. Ni(2+)-binding residues include His-139, His-141, and Lys-222. Residue Lys-222 is modified to N6-carboxylysine. Substrate is bound at residue His-224. Ni(2+)-binding residues include His-251 and His-277. Catalysis depends on His-325, which acts as the Proton donor. A Ni(2+)-binding site is contributed by Asp-365.

Belongs to the metallo-dependent hydrolases superfamily. Urease alpha subunit family. As to quaternary structure, heterotrimer of UreA (gamma), UreB (beta) and UreC (alpha) subunits. Three heterotrimers associate to form the active enzyme. The cofactor is Ni cation. Post-translationally, carboxylation allows a single lysine to coordinate two nickel ions.

The protein localises to the cytoplasm. The enzyme catalyses urea + 2 H2O + H(+) = hydrogencarbonate + 2 NH4(+). The protein operates within nitrogen metabolism; urea degradation; CO(2) and NH(3) from urea (urease route): step 1/1. The chain is Urease subunit alpha from Albidiferax ferrireducens (strain ATCC BAA-621 / DSM 15236 / T118) (Rhodoferax ferrireducens).